The chain runs to 512 residues: Protein arginine N-methyltransferase 2 (512 aa).

Positions 67–103 (TSNIDDLPLPPPIQEVEEEEPTQQNIEQQQQTQDESD) are disordered. Over residues 88-99 (TQQNIEQQQQTQ) the composition is skewed to low complexity. In terms of domain architecture, SAM-dependent MTase PRMT-type spans 120–508 (DEEYFSSYSK…KTNPFDYSYQ (389 aa)). 4 residues coordinate S-adenosyl-L-methionine: His-133, Arg-142, Gly-166, and Glu-217. Catalysis depends on residues Glu-231 and Glu-240. Residues 375-395 (DDDDNDNNNNNNDNSNDDENK) are disordered.

The protein belongs to the class I-like SAM-binding methyltransferase superfamily. Protein arginine N-methyltransferase family.

The protein resides in the cytoplasm. Its subcellular location is the nucleus. The catalysed reaction is L-arginyl-[protein] + 2 S-adenosyl-L-methionine = N(omega),N(omega)-dimethyl-L-arginyl-[protein] + 2 S-adenosyl-L-homocysteine + 2 H(+). In terms of biological role, arginine methyltransferase that methylates the guanidino nitrogens of arginyl residues in some proteins such as histones. This is Protein arginine N-methyltransferase 2 (prmt2) from Dictyostelium discoideum (Social amoeba).